The primary structure comprises 1237 residues: Anion exchange protein 2 (1237 aa).

The interval 1–237 (MSSAPRRPAS…SYNLQERRRI (237 aa)) is disordered. Over 1–704 (MSSAPRRPAS…DFRDALDPQC (704 aa)) the chain is Cytoplasmic. 2 stretches are compositionally biased toward basic and acidic residues: residues 37–49 (ELHR…RFEE) and 58–75 (GGEE…EYHR). Composition is skewed to basic residues over residues 76 to 85 (QSSHHIHHPL) and 94 to 110 (RRRK…RRRP). Phosphoserine occurs at positions 113, 132, 144, 170, and 172. The segment covering 120 to 133 (TIEEGEEDEDEASE) has biased composition (acidic residues). The span at 137–151 (ARAPTQPSPASTPSS) shows a compositional bias: low complexity. Residues 205–215 (GTAGGDDGGAS) show a composition bias toward gly residues. Serine 239 carries the phosphoserine modification. At threonine 253 the chain carries Phosphothreonine. Lysine 270 bears the N6-methyllysine mark. Positions 286 to 316 (RKNAKGSVQSGREGREPGPTPRARPRAPHKP) are disordered. A Phosphoserine modification is found at serine 439. Residues 445 to 466 (SLLGHHHGQGAESDPHVTEPLI) are disordered. The interval 704 to 1237 (CLAAVIFIYF…DEYNEMPMPV (534 aa)) is membrane (anion exchange). The next 4 helical transmembrane spans lie at 705–725 (LAAV…FGGL), 750–770 (FCLL…LLVF), 792–812 (IGFW…SFLV), and 822–842 (IFAF…LVKI). Over 843 to 893 (FQEHPLHGCSVSNSSEADSGDNATWAGTRVTLGLGNGSSAGPAGQGRPRGQ) the chain is Extracellular. Residues asparagine 855, asparagine 864, and asparagine 878 are each glycosylated (N-linked (GlcNAc...) asparagine). The helical transmembrane segment at 894–914 (PNTALLSLVLMAGTFFIAFFL) threads the bilayer. Residues 915–929 (RKFKNGRFFPGRVRR) are Cytoplasmic-facing. 5 helical membrane passes run 930–950 (VIGD…DYSI), 985–1005 (FPVW…ILIF), 1032–1052 (LLLI…WLAA), 1086–1106 (RVTG…GDLL), and 1109–1129 (IPLA…LNGI). Residue cysteine 1169 is the site of S-palmitoyl cysteine attachment. A helical membrane pass occupies residues 1170-1190 (LALLWAVMSTAASLAFPFILI).

The protein belongs to the anion exchanger (TC 2.A.31) family.

The protein resides in the apical cell membrane. It is found in the basolateral cell membrane. The enzyme catalyses hydrogencarbonate(in) + chloride(out) = hydrogencarbonate(out) + chloride(in). Functionally, sodium-independent anion exchanger which mediates the electroneutral exchange of chloride for bicarbonate ions across the cell membrane. Plays an important role in osteoclast differentiation and function. Regulates bone resorption and calpain-dependent actin cytoskeleton organization in osteoclasts via anion exchange-dependent control of pH. Essential for intracellular pH regulation in CD8(+) T-cells upon CD3 stimulation, modulating CD8(+) T-cell response. This is Anion exchange protein 2 (SLC4A2) from Equus caballus (Horse).